A 335-amino-acid chain; its full sequence is Glyceraldehyde-3-phosphate dehydrogenase 2 (335 aa).

NAD(+) contacts are provided by residues 12–13 (RI), Asp35, Arg79, and Ser121. D-glyceraldehyde 3-phosphate is bound by residues 152-154 (SCT) and Thr183. Catalysis depends on Cys153, which acts as the Nucleophile. Residue Asn184 coordinates NAD(+). D-glyceraldehyde 3-phosphate-binding positions include Arg198, 211 to 212 (TG), and Arg234. NAD(+) is bound at residue Asn316.

It belongs to the glyceraldehyde-3-phosphate dehydrogenase family. As to quaternary structure, homotetramer.

The protein resides in the cytoplasm. It carries out the reaction D-glyceraldehyde 3-phosphate + phosphate + NAD(+) = (2R)-3-phospho-glyceroyl phosphate + NADH + H(+). It functions in the pathway carbohydrate degradation; glycolysis; pyruvate from D-glyceraldehyde 3-phosphate: step 1/5. With respect to regulation, inhibited by pentalenolactone. Its function is as follows. Catalyzes the oxidative phosphorylation of glyceraldehyde 3-phosphate (G3P) to 1,3-bisphosphoglycerate (BPG) using the cofactor NAD. The first reaction step involves the formation of a hemiacetal intermediate between G3P and a cysteine residue, and this hemiacetal intermediate is then oxidized to a thioester, with concomitant reduction of NAD to NADH. The reduced NADH is then exchanged with the second NAD, and the thioester is attacked by a nucleophilic inorganic phosphate to produce BPG. In Streptomyces avermitilis (strain ATCC 31267 / DSM 46492 / JCM 5070 / NBRC 14893 / NCIMB 12804 / NRRL 8165 / MA-4680), this protein is Glyceraldehyde-3-phosphate dehydrogenase 2 (gap2).